The following is a 316-amino-acid chain: Transaldolase 2 (316 aa).

Lys-131 acts as the Schiff-base intermediate with substrate in catalysis.

Belongs to the transaldolase family. Type 1 subfamily. In terms of assembly, homodimer.

The protein resides in the cytoplasm. It carries out the reaction D-sedoheptulose 7-phosphate + D-glyceraldehyde 3-phosphate = D-erythrose 4-phosphate + beta-D-fructose 6-phosphate. Its pathway is carbohydrate degradation; pentose phosphate pathway; D-glyceraldehyde 3-phosphate and beta-D-fructose 6-phosphate from D-ribose 5-phosphate and D-xylulose 5-phosphate (non-oxidative stage): step 2/3. Functionally, transaldolase is important for the balance of metabolites in the pentose-phosphate pathway. This Salmonella choleraesuis (strain SC-B67) protein is Transaldolase 2.